Reading from the N-terminus, the 130-residue chain is Protachykinin-1 (130 aa).

Residues Met-1–Ala-19 form the signal peptide. Residues Glu-20–Ala-56 constitute a propeptide that is removed on maturation. Residues Met-68 and Met-107 each carry the methionine amide modification.

The protein belongs to the tachykinin family. In terms of processing, the substance P form is cleaved at Pro-59 by the prolyl endopeptidase FAP (seprase) activity (in vitro). Substance P is also cleaved and degraded by Angiotensin-converting enzyme (ACE) and neprilysin (MME).

The protein localises to the secreted. Its function is as follows. Tachykinins are active peptides which excite neurons, evoke behavioral responses, are potent vasodilators and secretagogues, and contract (directly or indirectly) many smooth muscles. This is Protachykinin-1 (Tac1) from Mus musculus (Mouse).